A 239-amino-acid polypeptide reads, in one-letter code: MLTRKQHELLLFIHERLKETGIPPSFDEMKEALDLASKSGIHRLITALEERGFIRRLPNRARALEVLRLPDSIAPGLNAQKKFAPSVIEGSLGKTPPPPARPAPVATNDDTSGTVSVPVMGRIAAGVPISAIQNQTHSLSLPPEMIGAGEHYALEVRGDSMIDAGIFDGDTVIIKRGDSANPGEIVVALVDDEEATLKRFRRKGASIALEAANPAYETRIFGPDRVRVQGKLVGLIRRY.

The H-T-H motif DNA-binding region spans 26–46 (FDEMKEALDLASKSGIHRLIT). The disordered stretch occupies residues 90 to 110 (GSLGKTPPPPARPAPVATNDD). Active-site for autocatalytic cleavage activity residues include Ser160 and Lys198.

This sequence belongs to the peptidase S24 family. Homodimer.

It carries out the reaction Hydrolysis of Ala-|-Gly bond in repressor LexA.. In terms of biological role, represses a number of genes involved in the response to DNA damage (SOS response), including recA and lexA. In the presence of single-stranded DNA, RecA interacts with LexA causing an autocatalytic cleavage which disrupts the DNA-binding part of LexA, leading to derepression of the SOS regulon and eventually DNA repair. The polypeptide is LexA repressor (Brucella anthropi (strain ATCC 49188 / DSM 6882 / CCUG 24695 / JCM 21032 / LMG 3331 / NBRC 15819 / NCTC 12168 / Alc 37) (Ochrobactrum anthropi)).